A 494-amino-acid chain; its full sequence is ATP-dependent RNA helicase HAS1 (494 aa).

The interval 1–23 is disordered; sequence MAQTKRSRDESEKEEVVVKADVE. A Q motif motif is present at residues 29 to 57; that stretch reads HSFKSLNLSQPTMRAIEKMGFSKMTPVQA. The region spanning 60 to 236 is the Helicase ATP-binding domain; that stretch reads IPPLMAGRDV…RISLRPGPLF (177 aa). 73–80 contacts ATP; sequence AKTGSGKT. Residues 183 to 186 carry the DEAD box motif; the sequence is DEAD. Residues 250–420 form the Helicase C-terminal domain; sequence GLEQGYVVCE…NVQSQLEKLI (171 aa). A Bipartite nuclear localization signal motif is present at residues 262–278; sequence KRFLLLFSFLKRNQKKK.

It belongs to the DEAD box helicase family. DDX18/HAS1 subfamily. In terms of assembly, associates in the nucleolus with the 60S and pre-60S ribosomal subunits.

It is found in the nucleus. It localises to the nucleolus. The enzyme catalyses ATP + H2O = ADP + phosphate + H(+). Functionally, ATP-dependent RNA helicase involved in 40S ribosomal subunit biogenesis. Required for the processing and cleavage of 35S pre-rRNA at sites A0, A1, and A2, leading to mature 18S rRNA. This chain is ATP-dependent RNA helicase HAS1 (HAS1), found in Candida glabrata (strain ATCC 2001 / BCRC 20586 / JCM 3761 / NBRC 0622 / NRRL Y-65 / CBS 138) (Yeast).